Consider the following 719-residue polypeptide: DNA ligase (719 aa).

NAD(+) is bound by residues 42-46, 92-93, and Glu126; these read DAAYD and SL. The N6-AMP-lysine intermediate role is filled by Lys128. NAD(+)-binding residues include Arg149, Glu185, Lys301, and Lys325. Positions 430, 433, 448, and 454 each coordinate Zn(2+). Residues 640–719 enclose the BRCT domain; the sequence is ATGSPVEGKT…DDWFKLVGED (80 aa).

Belongs to the NAD-dependent DNA ligase family. LigA subfamily. Mg(2+) is required as a cofactor. Mn(2+) serves as cofactor.

It catalyses the reaction NAD(+) + (deoxyribonucleotide)n-3'-hydroxyl + 5'-phospho-(deoxyribonucleotide)m = (deoxyribonucleotide)n+m + AMP + beta-nicotinamide D-nucleotide.. Its function is as follows. DNA ligase that catalyzes the formation of phosphodiester linkages between 5'-phosphoryl and 3'-hydroxyl groups in double-stranded DNA using NAD as a coenzyme and as the energy source for the reaction. It is essential for DNA replication and repair of damaged DNA. The polypeptide is DNA ligase (Brucella melitensis biotype 1 (strain ATCC 23456 / CCUG 17765 / NCTC 10094 / 16M)).